The sequence spans 81 residues: Small ribosomal subunit protein bS16 (81 aa).

It belongs to the bacterial ribosomal protein bS16 family.

The polypeptide is Small ribosomal subunit protein bS16 (Coprothermobacter proteolyticus (strain ATCC 35245 / DSM 5265 / OCM 4 / BT)).